The sequence spans 368 residues: RNA polymerase sigma factor SigA (368 aa).

The interval Val60–Asp86 is disordered. Over residues Pro67 to Ala84 the composition is skewed to basic and acidic residues. Residues Leu135–Thr205 form a sigma-70 factor domain-2 region. The Interaction with polymerase core subunit RpoC motif lies at Asp159–Gln162. Positions Glu214–His290 are sigma-70 factor domain-3. Positions Val303–His356 are sigma-70 factor domain-4. Positions Leu329–Ala348 form a DNA-binding region, H-T-H motif.

It belongs to the sigma-70 factor family. RpoD/SigA subfamily. As to quaternary structure, interacts transiently with the RNA polymerase catalytic core.

The protein localises to the cytoplasm. Its function is as follows. Sigma factors are initiation factors that promote the attachment of RNA polymerase to specific initiation sites and are then released. This sigma factor is the primary sigma factor during exponential growth. The protein is RNA polymerase sigma factor SigA of Enterococcus faecalis (strain ATCC 700802 / V583).